We begin with the raw amino-acid sequence, 314 residues long: 4-hydroxy-3-methylbut-2-enyl diphosphate reductase (314 aa).

C12 contributes to the [4Fe-4S] cluster binding site. The (2E)-4-hydroxy-3-methylbut-2-enyl diphosphate site is built by H41 and H74. Dimethylallyl diphosphate is bound by residues H41 and H74. Isopentenyl diphosphate contacts are provided by H41 and H74. A [4Fe-4S] cluster-binding site is contributed by C96. H124 provides a ligand contact to (2E)-4-hydroxy-3-methylbut-2-enyl diphosphate. H124 is a dimethylallyl diphosphate binding site. H124 contributes to the isopentenyl diphosphate binding site. E126 acts as the Proton donor in catalysis. T167 is a (2E)-4-hydroxy-3-methylbut-2-enyl diphosphate binding site. [4Fe-4S] cluster is bound at residue C197. Residues S225, S226, N227, and S269 each contribute to the (2E)-4-hydroxy-3-methylbut-2-enyl diphosphate site. Dimethylallyl diphosphate contacts are provided by S225, S226, N227, and S269. S225, S226, N227, and S269 together coordinate isopentenyl diphosphate.

Belongs to the IspH family. Requires [4Fe-4S] cluster as cofactor.

The enzyme catalyses isopentenyl diphosphate + 2 oxidized [2Fe-2S]-[ferredoxin] + H2O = (2E)-4-hydroxy-3-methylbut-2-enyl diphosphate + 2 reduced [2Fe-2S]-[ferredoxin] + 2 H(+). It carries out the reaction dimethylallyl diphosphate + 2 oxidized [2Fe-2S]-[ferredoxin] + H2O = (2E)-4-hydroxy-3-methylbut-2-enyl diphosphate + 2 reduced [2Fe-2S]-[ferredoxin] + 2 H(+). It participates in isoprenoid biosynthesis; dimethylallyl diphosphate biosynthesis; dimethylallyl diphosphate from (2E)-4-hydroxy-3-methylbutenyl diphosphate: step 1/1. It functions in the pathway isoprenoid biosynthesis; isopentenyl diphosphate biosynthesis via DXP pathway; isopentenyl diphosphate from 1-deoxy-D-xylulose 5-phosphate: step 6/6. Functionally, catalyzes the conversion of 1-hydroxy-2-methyl-2-(E)-butenyl 4-diphosphate (HMBPP) into a mixture of isopentenyl diphosphate (IPP) and dimethylallyl diphosphate (DMAPP). Acts in the terminal step of the DOXP/MEP pathway for isoprenoid precursor biosynthesis. This Aliivibrio fischeri (strain ATCC 700601 / ES114) (Vibrio fischeri) protein is 4-hydroxy-3-methylbut-2-enyl diphosphate reductase.